The following is a 415-amino-acid chain: uncharacterized protein (415 aa).

Positions 66, 72, 75, and 149 each coordinate [4Fe-4S] cluster. S-adenosyl-L-methionine is bound by residues Gln249, Phe276, Glu296, and Asp344. Cys370 acts as the Nucleophile in catalysis.

This sequence belongs to the class I-like SAM-binding methyltransferase superfamily. RNA M5U methyltransferase family.

This is an uncharacterized protein from Brucella melitensis biotype 1 (strain ATCC 23456 / CCUG 17765 / NCTC 10094 / 16M).